Reading from the N-terminus, the 827-residue chain is Valine--tRNA ligase (827 aa).

The 'HIGH' region motif lies at 41-51 (PNVTGQLHLGH). A 'KMSKS' region motif is present at residues 511–515 (KMTKS). K514 contributes to the ATP binding site. Residues 765 to 827 (ENLSKEKAQK…KELLDEKIIE (63 aa)) are a coiled coil.

It belongs to the class-I aminoacyl-tRNA synthetase family. ValS type 1 subfamily. As to quaternary structure, monomer.

It is found in the cytoplasm. The catalysed reaction is tRNA(Val) + L-valine + ATP = L-valyl-tRNA(Val) + AMP + diphosphate. Its function is as follows. Catalyzes the attachment of valine to tRNA(Val). As ValRS can inadvertently accommodate and process structurally similar amino acids such as threonine, to avoid such errors, it has a 'posttransfer' editing activity that hydrolyzes mischarged Thr-tRNA(Val) in a tRNA-dependent manner. This Mycoplasmopsis pulmonis (strain UAB CTIP) (Mycoplasma pulmonis) protein is Valine--tRNA ligase.